The following is a 153-amino-acid chain: UPF0756 membrane protein Pjdr2_2290 (153 aa).

The next 5 membrane-spanning stretches (helical) occupy residues 6 to 26 (LILV…IATA), 50 to 70 (LELG…SGKV), 75 to 95 (LIAA…AVAA), 111 to 131 (MVVG…GIPV), and 132 to 152 (GPLM…LMSG).

It belongs to the UPF0756 family.

Its subcellular location is the cell membrane. The polypeptide is UPF0756 membrane protein Pjdr2_2290 (Paenibacillus sp. (strain JDR-2)).